The chain runs to 210 residues: Nucleoside triphosphate pyrophosphatase (210 aa).

Asp79 (proton acceptor) is an active-site residue.

The protein belongs to the Maf family. A divalent metal cation serves as cofactor.

Its subcellular location is the cytoplasm. It carries out the reaction a ribonucleoside 5'-triphosphate + H2O = a ribonucleoside 5'-phosphate + diphosphate + H(+). The enzyme catalyses a 2'-deoxyribonucleoside 5'-triphosphate + H2O = a 2'-deoxyribonucleoside 5'-phosphate + diphosphate + H(+). In terms of biological role, nucleoside triphosphate pyrophosphatase. May have a dual role in cell division arrest and in preventing the incorporation of modified nucleotides into cellular nucleic acids. This is Nucleoside triphosphate pyrophosphatase from Mycolicibacterium paratuberculosis (strain ATCC BAA-968 / K-10) (Mycobacterium paratuberculosis).